A 307-amino-acid chain; its full sequence is uncharacterized protein (307 aa).

8 consecutive transmembrane segments (helical) span residues 1–21 (MLIL…MNML), 52–72 (IVFT…IGFV), 99–119 (FIAI…LLFF), 133–153 (FLGL…AGPL), 174–194 (LLIG…IGIL), 208–228 (AMSV…MAAV), 242–262 (VVFN…ATGF), and 277–297 (FSLL…NLFY).

It localises to the cell membrane. This is an uncharacterized protein from Bacillus subtilis (strain 168).